The sequence spans 220 residues: dITP/XTP pyrophosphatase (220 aa).

13 to 18 provides a ligand contact to substrate; that stretch reads SHNAGK. 2 residues coordinate Mg(2+): aspartate 45 and aspartate 74. Catalysis depends on aspartate 74, which acts as the Proton acceptor. Substrate is bound by residues serine 75, 163–166, lysine 186, and 199–200; these read FGYD and HR.

This sequence belongs to the HAM1 NTPase family. Homodimer. Requires Mg(2+) as cofactor.

The enzyme catalyses XTP + H2O = XMP + diphosphate + H(+). The catalysed reaction is dITP + H2O = dIMP + diphosphate + H(+). It catalyses the reaction ITP + H2O = IMP + diphosphate + H(+). Functionally, pyrophosphatase that catalyzes the hydrolysis of nucleoside triphosphates to their monophosphate derivatives, with a high preference for the non-canonical purine nucleotides XTP (xanthosine triphosphate), dITP (deoxyinosine triphosphate) and ITP. Seems to function as a house-cleaning enzyme that removes non-canonical purine nucleotides from the nucleotide pool, thus preventing their incorporation into DNA/RNA and avoiding chromosomal lesions. This chain is dITP/XTP pyrophosphatase, found in Brucella melitensis biotype 1 (strain ATCC 23456 / CCUG 17765 / NCTC 10094 / 16M).